The following is a 153-amino-acid chain: Natriuretic peptides A (153 aa).

The N-terminal stretch at 1–25 (MGPFSTITVSFLFCLAFWHPDQIGA) is a signal peptide. 2 propeptides span residues 26–123 (NPVY…TAPR) and 93–103 (DGEALGRSTWE). The segment at 54–101 (EDEAVPPQALSEQSDEAGAALSPLPEVPPWTGEVSPAQRDGEALGRST) is disordered. Ser-129 is modified (phosphoserine). A disulfide bond links Cys-130 and Cys-146. The important for degradation of atrial natriuretic peptide by IDE stretch occupies residues 147–151 (NSFRY).

This sequence belongs to the natriuretic peptide family. In terms of assembly, homodimer; disulfide-linked antiparallel dimer. The precursor molecule is proteolytically cleaved by CORIN at Arg-123 to produce the atrial natriuretic peptide. Undergoes further proteolytic cleavage by unknown proteases to give rise to long-acting natriuretic peptide, vessel dilator and kaliuretic peptide. Additional processing gives rise to the auriculin and atriopeptin peptides. In the kidneys, alternative processing by an unknown protease results in the peptide urodilatin. Post-translationally, cleavage by MME initiates degradation of the factor and thereby regulates its activity. Degradation by IDE results in reduced activation of NPR1 (in vitro). During IDE degradation, the resulting products can temporarily stimulate NPR2 to produce cGMP, before the fragments are completely degraded and inactivated by IDE (in vitro). In terms of processing, degraded by IDE. Phosphorylation on Ser-129 decreases vasorelaxant activity.

Its subcellular location is the secreted. It localises to the perikaryon. It is found in the cell projection. In terms of biological role, hormone that plays a key role in mediating cardio-renal homeostasis, and is involved in vascular remodeling and regulating energy metabolism. Acts by specifically binding and stimulating NPR1 to produce cGMP, which in turn activates effector proteins, such as PRKG1, that drive various biological responses. Regulates vasodilation, natriuresis, diuresis and aldosterone synthesis and is therefore essential for regulating blood pressure, controlling the extracellular fluid volume and maintaining the fluid-electrolyte balance. Also involved in inhibiting cardiac remodeling and cardiac hypertrophy by inducing cardiomyocyte apoptosis and attenuating the growth of cardiomyocytes and fibroblasts. Plays a role in female pregnancy by promoting trophoblast invasion and spiral artery remodeling in uterus, and thus prevents pregnancy-induced hypertension. In adipose tissue, acts in various cGMP- and PKG-dependent pathways to regulate lipid metabolism and energy homeostasis. This includes up-regulating lipid metabolism and mitochondrial oxygen utilization by activating the AMP-activated protein kinase (AMPK), and increasing energy expenditure by acting via MAPK11 to promote the UCP1-dependent thermogenesis of brown adipose tissue. Binds the clearance receptor NPR3 which removes the hormone from circulation. Functionally, may have a role in cardio-renal homeostasis through regulation of natriuresis, diuresis, vasodilation, and inhibiting aldosterone synthesis. In vitro, promotes the production of cGMP and induces vasodilation. May promote natriuresis, at least in part, by enhancing prostaglandin E2 synthesis resulting in the inhibition of renal Na+-K+-ATPase. However reports on the involvement of this peptide in mammal blood volume and blood pressure homeostasis are conflicting; according to a report, in vivo it is not sufficient to activate cGMP and does not inhibit collecting duct transport nor effect diuresis and natriuresis. Appears to bind to specific receptors that are distinct from the receptors bound by atrial natriuretic peptide and vessel dilator. Possibly enhances protein excretion in urine by decreasing proximal tubular protein reabsorption. Its function is as follows. May have a role in cardio-renal homeostasis through regulation of natriuresis, diuresis, and vasodilation. In vitro, promotes the production of cGMP and induces vasodilation. May promote natriuresis, at least in part, by enhancing prostaglandin E2 synthesis resulting in the inhibition of renal Na+-K+-ATPase. However reports on the involvement of this peptide in mammal blood volume and blood pressure homeostasis are conflicting; according to a report it is not sufficient to activate cGMP and does not inhibit collecting duct transport nor effect diuresis and natriuresis. Appears to bind to specific receptors that are distinct from the receptors bound by the atrial natriuretic and long-acting natriuretic peptides. Possibly functions in protein excretion in urine by maintaining the integrity of the proximal tubules and enhancing protein excretion by decreasing proximal tubular protein reabsorption. May have a role in cardio-renal homeostasis through regulation of diuresis and inhibiting aldosterone synthesis. In vitro, promotes the production of cGMP and induces vasodilation. May promote natriuresis, at least in part, by enhancing prostaglandin E2 synthesis resulting in the inhibition of renal Na+-K+-ATPase. May have a role in potassium excretion but not sodium excretion (natriuresis). Possibly enhances protein excretion in urine by decreasing proximal tubular protein reabsorption. In terms of biological role, hormone produced in the kidneys that appears to be important for maintaining cardio-renal homeostasis. Mediates vasodilation, natriuresis and diuresis primarily in the renal system, in order to maintain the extracellular fluid volume and control the fluid-electrolyte balance. Specifically binds and stimulates cGMP production by renal transmembrane receptors, likely NPR1. Urodilatin not ANP, may be the natriuretic peptide responsible for the regulation of sodium and water homeostasis in the kidney. Functionally, may have a role in cardio-renal homeostasis through regulation of natriuresis and vasodilation. In vivo promotes natriuresis and in vitro, vasodilates renal artery strips. Its function is as follows. May have a role in cardio-renal homeostasis through regulation of regulation of natriuresis and vasodilation. In vivo promotes natriuresis. In vitro, vasodilates intestinal smooth muscle but not smooth muscle strips. May have a role in cardio-renal homeostasis through regulation of natriuresis and vasodilation. In vivo promotes natriuresis. In vitro, selectively vasodilates intestinal and vascular smooth muscle strips. In terms of biological role, may have a role in cardio-renal homeostasis through regulation of natriuresis and vasodilation. In vivo promotes natriuresis. In vitro, selectively vasodilates intestinal smooth muscle but not vascular smooth muscle strips. In Oryctolagus cuniculus (Rabbit), this protein is Natriuretic peptides A (NPPA).